The following is a 208-amino-acid chain: MKSNSQDAASIVWHPQLVTKQARNQSNGHKSRMIWFTGLSGSGKSTIANAVQAELFKRGIQVYVLDGDNLRHGLNADLSFSMEDRKENIRRTAEVGKLFVDAGLVVLAALISPVEEERQRARSRFAEDEFLEVYVSCTLQECEKRDPKGLYKKARKGEIPQFTGIHQPYEEPKNPDICIDTTDRTVEQSVQIILPIILEKIAWKEGEQ.

Residue 38–45 (GLSGSGKS) coordinates ATP. Ser112 functions as the Phosphoserine intermediate in the catalytic mechanism.

This sequence belongs to the APS kinase family.

It carries out the reaction adenosine 5'-phosphosulfate + ATP = 3'-phosphoadenylyl sulfate + ADP + H(+). The protein operates within sulfur metabolism; hydrogen sulfide biosynthesis; sulfite from sulfate: step 2/3. Catalyzes the synthesis of activated sulfate. The sequence is that of Probable adenylyl-sulfate kinase from Halalkalibacterium halodurans (strain ATCC BAA-125 / DSM 18197 / FERM 7344 / JCM 9153 / C-125) (Bacillus halodurans).